The chain runs to 611 residues: DNA mismatch repair protein MutL (611 aa).

It belongs to the DNA mismatch repair MutL/HexB family.

Functionally, this protein is involved in the repair of mismatches in DNA. It is required for dam-dependent methyl-directed DNA mismatch repair. May act as a 'molecular matchmaker', a protein that promotes the formation of a stable complex between two or more DNA-binding proteins in an ATP-dependent manner without itself being part of a final effector complex. The polypeptide is DNA mismatch repair protein MutL (Borrelia garinii subsp. bavariensis (strain ATCC BAA-2496 / DSM 23469 / PBi) (Borreliella bavariensis)).